A 385-amino-acid chain; its full sequence is Glucans biosynthesis protein C (385 aa).

A run of 10 helical transmembrane segments spans residues 17-37 (AWLMLLGIPFHISLIYSSHTW), 60-80 (MQVFFVISGYFSYMLFLRYPL), 91-111 (VGIPMLTAIPLLTLPQFIMLQ), 137-157 (ISHLWFLLVLVVMTTLCVWIF), 173-193 (KFSMVKLSVIFLCLGIGYAVI), 212-232 (FIVMQTLFYLPFFILGALAFI), 239-259 (LFTTPSRGCTLAAALAFVAYL), 274-294 (TESVITMVLGLWMVNVVFSFG), 311-331 (ASLFIYLVHHPLTLFFGAYIT), and 338-358 (WLGFLCGLIFVVGIAIILYEI).

It belongs to the acyltransferase 3 family. OpgC subfamily.

The protein localises to the cell membrane. Its pathway is glycan metabolism; osmoregulated periplasmic glucan (OPG) biosynthesis. Necessary for the succinyl substitution of periplasmic glucans. Could catalyze the transfer of succinyl residues from the cytoplasmic side of the membrane to the nascent glucan backbones on the periplasmic side of the membrane. The polypeptide is Glucans biosynthesis protein C (Escherichia coli O139:H28 (strain E24377A / ETEC)).